Consider the following 135-residue polypeptide: C-type lectin BpLec (135 aa).

Cystine bridges form between Cys-3–Cys-14, Cys-31–Cys-131, Cys-38–Cys-133, and Cys-106–Cys-123. The region spanning 10–132 (MNGLCYKIFD…CESKNAFLCQ (123 aa)) is the C-type lectin domain. 5 residues coordinate Ca(2+): Gln-96, Asp-98, Glu-104, Asn-119, and Asp-120. Positions 96–98 (QPD) match the Galactose-binding motif.

The protein belongs to the true venom lectin family. In terms of assembly, homodimer; disulfide-linked. Expressed by the venom gland.

The protein localises to the secreted. Functionally, this lectin displays hemagglutinating activity on dog (128'000 HU/mg) and cat erythrocytes, that is inhibited by beta-galactosides (D-galactose, D-lactose, and N-acetyl-D-galactosamine) and EDTA. In addition, has been shown to hemagglutinate promastigote forms of Leishmania amazonensis. Also inhibits Gram-positive (S.aureus ATCC 25923) (MIC is 31.25 ug/ml) but not Gram-negative (E.coli ATCC 25922) bacteria. Is a calcium-dependent lectin. The sequence is that of C-type lectin BpLec from Bothrops pauloensis (Neuwied's lancehead).